An 893-amino-acid polypeptide reads, in one-letter code: POU domain protein 2, isoform B (893 aa).

The interval 586 to 668 (QMKQQQREDP…STPKPTSGLT (83 aa)) is disordered. Positions 602–617 (PLAKSPLRSPSLSPVP) are enriched in low complexity. Residues 623 to 646 (QQRTPPNSMTANSLGMSSAVMTPN) show a composition bias toward polar residues. Positions 647–665 (TPSMQQQPQLQQSTPKPTS) are enriched in low complexity. The POU-specific domain maps to 681–755 (EETTDLEELE…LLQKWLEDAD (75 aa)). Residues 786–845 (RRKKRTSIETTVRTTLEKAFLMNCKPTSEEISQLSERLNMDKEVIRVWFCNRRQKEKRIN) constitute a DNA-binding region (homeobox).

It belongs to the POU transcription factor family. Class-2 subfamily. Initial expression in cellular blastoderm stage, then in ectodermal stripes during germband extension. Broad expression in the neuroectoderm followed by limitation to discrete subsets of CNS cells, and expression in specific PNS neurons and support cells.

It is found in the nucleus. Functionally, DNA-binding regulatory protein implicated in early development. Involved in neuronal cell fate decision. May act as an octamer-dependent activator of transcription. Could also play an early role in specific ectodermal cells, and a subsequent role in the embryonic nervous system. In Drosophila melanogaster (Fruit fly), this protein is POU domain protein 2, isoform B.